Here is a 446-residue protein sequence, read N- to C-terminus: Hercynine oxygenase (446 aa).

His51 is a binding site for Fe cation. 87–90 contributes to the gamma-L-glutamyl-L-cysteine binding site; the sequence is RASR. Positions 134 and 138 each coordinate Fe cation. Asp416 and Arg420 together coordinate gamma-L-glutamyl-L-cysteine.

It belongs to the EgtB family. In terms of assembly, monomer. Fe(2+) is required as a cofactor.

It carries out the reaction gamma-L-glutamyl-L-cysteine + hercynine + O2 = gamma-L-glutamyl-hercynylcysteine S-oxide + H2O. It functions in the pathway amino-acid biosynthesis; ergothioneine biosynthesis. Its function is as follows. Catalyzes the oxidative sulfurization of hercynine (N-alpha,N-alpha,N-alpha-trimethyl-L-histidine) into hercynyl-gamma-L-glutamyl-L-cysteine sulfoxide, a step in the biosynthesis pathway of ergothioneine. In Mycolicibacterium thermoresistibile (strain ATCC 19527 / DSM 44167 / CIP 105390 / JCM 6362 / NCTC 10409 / 316) (Mycobacterium thermoresistibile), this protein is Hercynine oxygenase.